A 308-amino-acid polypeptide reads, in one-letter code: Probable GTP 3',8-cyclase (308 aa).

The Radical SAM core domain maps to 4-224 (RFGRPLEDLR…QIRKKHFRPR (221 aa)). Arginine 13 is a GTP binding site. Residues cysteine 20, cysteine 24, and cysteine 27 each contribute to the [4Fe-4S] cluster site. A GTP-binding site is contributed by lysine 60. Glycine 64 is a binding site for S-adenosyl-L-methionine. Threonine 90 lines the GTP pocket. Serine 114 is an S-adenosyl-L-methionine binding site. Position 151 (lysine 151) interacts with GTP. Residues cysteine 245 and cysteine 248 each coordinate [4Fe-4S] cluster. Position 250 to 252 (250 to 252 (RIR)) interacts with GTP. Cysteine 262 contributes to the [4Fe-4S] cluster binding site.

Belongs to the radical SAM superfamily. MoaA family. It depends on [4Fe-4S] cluster as a cofactor.

The catalysed reaction is GTP + AH2 + S-adenosyl-L-methionine = (8S)-3',8-cyclo-7,8-dihydroguanosine 5'-triphosphate + 5'-deoxyadenosine + L-methionine + A + H(+). It participates in cofactor biosynthesis; molybdopterin biosynthesis. In terms of biological role, catalyzes the cyclization of GTP to (8S)-3',8-cyclo-7,8-dihydroguanosine 5'-triphosphate. The sequence is that of Probable GTP 3',8-cyclase from Saccharolobus islandicus (strain M.16.27) (Sulfolobus islandicus).